Here is a 695-residue protein sequence, read N- to C-terminus: Testis-specific Y-encoded-like protein 2 (695 aa).

The interval 1–56 is disordered; that stretch reads MDRPDEGPPAKTRRLSSSESPQRDPPPPPPPPPLLRLPLPPPQQRPRLQEETEAAQ. Residue Lys-11 forms a Glycyl lysine isopeptide (Lys-Gly) (interchain with G-Cter in SUMO2) linkage. 2 positions are modified to phosphoserine: Ser-18 and Ser-20. The segment covering 23–44 has biased composition (pro residues); that stretch reads RDPPPPPPPPPLLRLPLPPPQQ. Residues Lys-163 and Lys-165 each participate in a glycyl lysine isopeptide (Lys-Gly) (interchain with G-Cter in SUMO2) cross-link. The disordered stretch occupies residues 175–207; sequence EDEDEQESMRSSRRRRRRRRRKQRKVKRESRQR. Basic residues predominate over residues 185-202; sequence SSRRRRRRRRRKQRKVKR. Thr-340 bears the Phosphothreonine mark. 2 disordered regions span residues 471–603 and 632–695; these read DINE…RDIE and VEEE…GKTG. Residues 481-491 are compositionally biased toward basic and acidic residues; that stretch reads SPDHDEVRNET. Acidic residues predominate over residues 496–518; it reads ESADDNETTDNNESADDNNENPE. Residues 519 to 535 show a composition bias toward basic and acidic residues; sequence DNNKNADDNKENPDNNK. Over residues 539-557 the composition is skewed to low complexity; it reads GNNFFNGGFWGSHGNNQDS. 2 stretches are compositionally biased toward acidic residues: residues 558–601 and 632–677; these read SDSD…DDRD and VEEE…DLED. Phosphoserine occurs at positions 670 and 673.

The protein belongs to the nucleosome assembly protein (NAP) family. In terms of assembly, interacts with histones. Interacts with CASK. Part of a complex containing CASK, TBR1 and TSPYL2. In terms of processing, phosphorylation at Ser-20 and/or Thr-340 impairs function on cell proliferation. In terms of tissue distribution, ubiquitously expressed, with highest levels in testis, adrenal gland, cerebral cortex, ovary, skeletal muscle and spleen. Present in testis, adrenal gland, cerebral cortex and ovary (at protein level).

Its subcellular location is the nucleus. It localises to the cytoplasm. Part of the CASK/TBR1/TSPYL2 transcriptional complex which modulates gene expression in response to neuronal synaptic activity, probably by facilitating nucleosome assembly. May inhibit cell proliferation by inducing p53-dependent CDKN1A expression. This Macaca fascicularis (Crab-eating macaque) protein is Testis-specific Y-encoded-like protein 2 (TSPYL2).